We begin with the raw amino-acid sequence, 432 residues long: Serine hydroxymethyltransferase (432 aa).

Residues Leu117 and 121–123 (GHL) contribute to the (6S)-5,6,7,8-tetrahydrofolate site. An N6-(pyridoxal phosphate)lysine modification is found at Lys226. 366 to 368 (SPF) contacts (6S)-5,6,7,8-tetrahydrofolate.

The protein belongs to the SHMT family. In terms of assembly, homodimer. Requires pyridoxal 5'-phosphate as cofactor.

Its subcellular location is the cytoplasm. It carries out the reaction (6R)-5,10-methylene-5,6,7,8-tetrahydrofolate + glycine + H2O = (6S)-5,6,7,8-tetrahydrofolate + L-serine. The protein operates within one-carbon metabolism; tetrahydrofolate interconversion. It participates in amino-acid biosynthesis; glycine biosynthesis; glycine from L-serine: step 1/1. Catalyzes the reversible interconversion of serine and glycine with tetrahydrofolate (THF) serving as the one-carbon carrier. This reaction serves as the major source of one-carbon groups required for the biosynthesis of purines, thymidylate, methionine, and other important biomolecules. Also exhibits THF-independent aldolase activity toward beta-hydroxyamino acids, producing glycine and aldehydes, via a retro-aldol mechanism. The chain is Serine hydroxymethyltransferase from Salinibacter ruber (strain DSM 13855 / M31).